The chain runs to 124 residues: U33-theraphotoxin-Cg1c (124 aa).

Residues 1–17 (MKFAVAIAFTLLVCVFA) form the signal peptide. Cystine bridges form between C26-C37, C31-C51, C36-C75, C61-C83, and C77-C94. The span at 93–108 (RCQEESGKSDKSKESQ) shows a compositional bias: basic and acidic residues. Residues 93–124 (RCQEESGKSDKSKESQGSDESEESEESKESSG) are disordered. A compositionally biased stretch (acidic residues) spans 109 to 118 (GSDESEESEE).

This sequence belongs to the neurotoxin 32 family. Expressed by the venom gland.

The protein localises to the secreted. The chain is U33-theraphotoxin-Cg1c from Chilobrachys guangxiensis (Chinese earth tiger tarantula).